The sequence spans 264 residues: Small ribosomal subunit protein eS1 (264 aa).

Residues 233–264 (GEGGGAGKPAGDETGAKVERADGYEPPVQESV) form a disordered region. Residues 242–255 (AGDETGAKVERADG) show a composition bias toward basic and acidic residues.

The protein belongs to the eukaryotic ribosomal protein eS1 family. As to quaternary structure, component of the small ribosomal subunit. Mature ribosomes consist of a small (40S) and a large (60S) subunit. The 40S subunit contains about 33 different proteins and 1 molecule of RNA (18S). The 60S subunit contains about 49 different proteins and 3 molecules of RNA (28S, 5.8S and 5S). Part of the small subunit (SSU) processome, composed of more than 70 proteins and the RNA chaperone small nucleolar RNA (snoRNA) U3.

It is found in the cytoplasm. The protein localises to the nucleus. The protein resides in the nucleolus. Its function is as follows. Component of the small ribosomal subunit. The ribosome is a large ribonucleoprotein complex responsible for the synthesis of proteins in the cell. Part of the small subunit (SSU) processome, first precursor of the small eukaryotic ribosomal subunit. During the assembly of the SSU processome in the nucleolus, many ribosome biogenesis factors, an RNA chaperone and ribosomal proteins associate with the nascent pre-rRNA and work in concert to generate RNA folding, modifications, rearrangements and cleavage as well as targeted degradation of pre-ribosomal RNA by the RNA exosome. May play a role during erythropoiesis. The protein is Small ribosomal subunit protein eS1 (rps3a) of Xenopus tropicalis (Western clawed frog).